We begin with the raw amino-acid sequence, 124 residues long: Small ribosomal subunit protein uS12 (124 aa).

The interval Met-1–Pro-42 is disordered. Residues Arg-9–Lys-18 are compositionally biased toward basic residues. Polar residues predominate over residues Asn-27–Pro-42. Asp-89 is subject to 3-methylthioaspartic acid.

It belongs to the universal ribosomal protein uS12 family. Part of the 30S ribosomal subunit. Contacts proteins S8 and S17. May interact with IF1 in the 30S initiation complex.

Its function is as follows. With S4 and S5 plays an important role in translational accuracy. In terms of biological role, interacts with and stabilizes bases of the 16S rRNA that are involved in tRNA selection in the A site and with the mRNA backbone. Located at the interface of the 30S and 50S subunits, it traverses the body of the 30S subunit contacting proteins on the other side and probably holding the rRNA structure together. The combined cluster of proteins S8, S12 and S17 appears to hold together the shoulder and platform of the 30S subunit. The chain is Small ribosomal subunit protein uS12 from Tropheryma whipplei (strain TW08/27) (Whipple's bacillus).